Reading from the N-terminus, the 340-residue chain is Pilin (340 aa).

The first 23 residues, 1 to 23 (MKLRHLLLTGAALTSFAATTVHG), serve as a signal peptide directing secretion. 2 cross-links (isoaspartyl lysine isopeptide (Lys-Asn)) span residues 36 to 168 (KNLD…QFKN) and 179 to 303 (KKVS…TFTN). Lysine 161 is covalently cross-linked (Threonyl lysine isopeptide (Lys-Thr) (interchain with T-311)). The EVPTG sorting signal motif lies at 308–312 (EVPTG). Threonine 311 is subject to Pentaglycyl murein peptidoglycan amidated threonine; alternate. Threonine 311 participates in a covalent cross-link: Threonyl lysine isopeptide (Thr-Lys) (interchain with K-161); alternate. The propeptide at 312-340 (GVAMTVAPYIALGIVAVGGALYFVKKKNA) is removed by sortase C1.

This sequence belongs to the Streptococcus pilin family. As to quaternary structure, forms columns of about 3-nanometers in diameter of head-to-tail-assembled molecules. In terms of processing, proteolytically processed and assembled in pili through a transpeptidation reaction catalyzed by the sortase C1. The last pilin subunit is cross-linked to the peptidoglycan.

The protein localises to the secreted. Its subcellular location is the cell wall. It localises to the fimbrium. Functionally, major component of the pilus. A stack of the pilin subunits, joined by intermolecular isopeptide bonds, forms the pilus. The pilus is required for bacterial adhesion to host cells, for bacterial aggregation, and for biofilm formation. The polypeptide is Pilin (Streptococcus pyogenes serotype M1).